Consider the following 649-residue polypeptide: Probable ADP-ribosylation factor GTPase-activating protein AGD14 (649 aa).

The Arf-GAP domain occupies 12 to 130; it reads EKIIRGLMKL…KYAGANDADK (119 aa). The C4-type zinc finger occupies 27-50; it reads CINCNSLGPQYVCTTFWTFVCMAC. Disordered stretches follow at residues 124–159, 209–279, 294–316, and 366–391; these read GANDADKPSKDSQDHVSSEDMTRRANSYHSYSQSPP, FSNE…VRSV, LGEAVSESRQNTGSQQGKTSNHV, and FTPANSFAGNLGQQPTSRPSELSAPK. Residues 127–146 are compositionally biased toward basic and acidic residues; the sequence is DADKPSKDSQDHVSSEDMTR. Positions 150 to 159 are enriched in low complexity; that stretch reads SYHSYSQSPP. Polar residues-rich tracts occupy residues 248-257, 269-279, 300-315, and 366-385; these read PQFQHSNAPP, RTTSSGSVRSV, ESRQNTGSQQGKTSNH, and FTPANSFAGNLGQQPTSRPS.

GTPase-activating protein (GAP) for ADP ribosylation factor (ARF). The polypeptide is Probable ADP-ribosylation factor GTPase-activating protein AGD14 (AGD14) (Arabidopsis thaliana (Mouse-ear cress)).